We begin with the raw amino-acid sequence, 310 residues long: Receptor homology region, transmembrane domain- and RING domain-containing protein 1 (310 aa).

A signal peptide spans 1-25 (MRLVVSSCLLVAAPFLSSLLRVSLA). The Lumenal portion of the chain corresponds to 26–168 (TVVLNSISAS…NPPDRGSAWT (143 aa)). Residues C65 and C92 are joined by a disulfide bond. N-linked (GlcNAc...) asparagine glycosylation is present at N75. Residues 81 to 149 (TTKFALIIRG…VAGEILRKYA (69 aa)) form the PA domain. Residues 169 to 189 (VLAISFFSLLLIVTFLLIAFF) form a helical membrane-spanning segment. The Cytoplasmic portion of the chain corresponds to 190–310 (APRHWTQWRG…FAFAQSSQSR (121 aa)). An RING-type; atypical zinc finger spans residues 232-274 (CAICLEDYRFGESLRLLPCQHAFHLNCIDSWLTKWGTSCPVCK). The span at 284 to 293 (SEVHKRESPR) shows a compositional bias: basic and acidic residues. Residues 284-310 (SEVHKRESPRTDTSTSRFAFAQSSQSR) are disordered. The span at 294-310 (TDTSTSRFAFAQSSQSR) shows a compositional bias: polar residues.

In terms of tissue distribution, expressed in leaves, stems, flowers and siliques.

The protein localises to the prevacuolar compartment membrane. The protein resides in the protein storage vacuole membrane. It localises to the golgi apparatus membrane. Involved in the trafficking of vacuolar proteins. Functions probably as a sorting receptor for protein trafficking to the protein storage vacuole (PSV) by binding the C-terminal vacuolar sorting determinant (VSD) of vacuolar-sorted proteins. This is Receptor homology region, transmembrane domain- and RING domain-containing protein 1 (RMR1) from Arabidopsis thaliana (Mouse-ear cress).